We begin with the raw amino-acid sequence, 520 residues long: Maturase K (520 aa).

It belongs to the intron maturase 2 family. MatK subfamily.

The protein resides in the plastid. Its subcellular location is the chloroplast. Its function is as follows. Usually encoded in the trnK tRNA gene intron. Probably assists in splicing its own and other chloroplast group II introns. This Linum perenne (Perennial flax) protein is Maturase K.